A 244-amino-acid polypeptide reads, in one-letter code: Triosephosphate isomerase (244 aa).

N8 to K10 contributes to the substrate binding site. H93 acts as the Electrophile in catalysis. Residue E161 is the Proton acceptor of the active site. Substrate contacts are provided by residues G167, S206, and G227–G228.

The protein belongs to the triosephosphate isomerase family. In terms of assembly, homodimer.

Its subcellular location is the cytoplasm. It catalyses the reaction D-glyceraldehyde 3-phosphate = dihydroxyacetone phosphate. The protein operates within carbohydrate biosynthesis; gluconeogenesis. It participates in carbohydrate degradation; glycolysis; D-glyceraldehyde 3-phosphate from glycerone phosphate: step 1/1. Involved in the gluconeogenesis. Catalyzes stereospecifically the conversion of dihydroxyacetone phosphate (DHAP) to D-glyceraldehyde-3-phosphate (G3P). This Deinococcus radiodurans (strain ATCC 13939 / DSM 20539 / JCM 16871 / CCUG 27074 / LMG 4051 / NBRC 15346 / NCIMB 9279 / VKM B-1422 / R1) protein is Triosephosphate isomerase.